Consider the following 337-residue polypeptide: uncharacterized protein (337 aa).

The 55-residue stretch at 22-76 folds into the F-box domain; the sequence is PFRLLSLPTLALKNVLLHIDFIDLLELSLASKKCEIYMKTCCLKIDSLHFHFRRI.

This is an uncharacterized protein from Caenorhabditis elegans.